The primary structure comprises 356 residues: Thrombopoietin (356 aa).

Residues 1-21 (MELTDLLLAAMLLAVARLTLS) form the signal peptide. Disulfide bonds link Cys28–Cys172 and Cys50–Cys106. N-linked (GlcNAc...) asparagine glycans are attached at residues Asn197, Asn206, Asn235, Asn249, Asn256, Asn336, and Asn351. The tract at residues 291–356 (GGLPPSPSLA…PHPRNLSQET (66 aa)) is disordered. Positions 330 to 339 (PSTTMPNSTA) are enriched in polar residues.

It belongs to the EPO/TPO family. In terms of tissue distribution, found mainly in the liver, kidney and skeletal muscle.

Its subcellular location is the secreted. Lineage-specific cytokine affecting the proliferation and maturation of megakaryocytes from their committed progenitor cells. It acts at a late stage of megakaryocyte development. It may be the major physiological regulator of circulating platelets. The chain is Thrombopoietin (Thpo) from Mus musculus (Mouse).